Reading from the N-terminus, the 278-residue chain is Envelope glycoprotein L (278 aa).

The first 32 residues, 1-32 (MCRRPDCGFSFSPGPVILLWCCLLLSIVSSAA), serve as a signal peptide directing secretion. The gL betaherpesvirus-type domain occupies 43 to 256 (VPAECPELTR…DKYYAGLPPE (214 aa)). C154 and C159 form a disulfide bridge.

The protein belongs to the herpesviridae glycoprotein L (gL) family. Betaherpesvirinae gL subfamily. As to quaternary structure, interacts with glycoprotein H (gH); this interaction is necessary for the correct processing and cell surface expression of gH. Forms the envelope pentamer complex (PC) composed of gH, gL, UL128, UL130, and UL131A. The pentamer interacts with host NRP2. Forms the envelope trimer complex composed of gH, gL, and gO. The trimer interacts with host PDGFRA. The trimer also interacts with host EPHA2.

The protein localises to the virion membrane. Its subcellular location is the host cell membrane. It localises to the host Golgi apparatus. It is found in the host trans-Golgi network. The heterodimer glycoprotein H-glycoprotein L is required for the fusion of viral and plasma membranes leading to virus entry into the host cell. Acts as a functional inhibitor of gH and maintains gH in an inhibited form. Upon binding to host integrins, gL dissociates from gH leading to activation of the viral fusion glycoproteins gB and gH. In human cytomegalovirus, forms two distincts complexes to mediate viral entry, a trimer and a pentamer at the surface of the virion envelope. The gH-gL-gO trimer is required for infection in fibroblasts by interacting with host PDGFRA, and in glioblastoma cells by interacting with host EPHA2. The gH-gL-UL128-UL130-UL131A pentamer is essential for viral entry in epithelial, endothelial and myeloid cells via interaction with host NRP2. The protein is Envelope glycoprotein L of Human cytomegalovirus (strain 119) (HHV-5).